Consider the following 144-residue polypeptide: MNLNTLSPDPGSRPSRRRVGRGIGSGLGKTCGKGHKGQKSRAGGYHKINFEGGQMPIQRRLPKMGFKSREGRTIDEVSLGELAKLNDEVIDLVALRKAGLINNSIKDVKVILSGELTAAIKLKGLRVTKGARSAIESLGGSIEE.

Residues 1-45 (MNLNTLSPDPGSRPSRRRVGRGIGSGLGKTCGKGHKGQKSRAGGY) are disordered. Residues 21–31 (RGIGSGLGKTC) are compositionally biased toward gly residues.

The protein belongs to the universal ribosomal protein uL15 family. As to quaternary structure, part of the 50S ribosomal subunit.

In terms of biological role, binds to the 23S rRNA. The sequence is that of Large ribosomal subunit protein uL15 from Legionella pneumophila (strain Corby).